Here is a 398-residue protein sequence, read N- to C-terminus: O-methyltransferase penC (398 aa).

Residue Asp263 participates in S-adenosyl-L-methionine binding. His305 serves as the catalytic Proton acceptor.

The protein belongs to the class I-like SAM-binding methyltransferase superfamily. Cation-independent O-methyltransferase family.

The protein operates within secondary metabolite biosynthesis. It participates in alkaloid biosynthesis. It functions in the pathway mycotoxin biosynthesis. Functionally, O-methyltransferase; part of the gene cluster that mediates the biosynthesis of penigequinolones, potent insecticidal alkaloids that contain a highly modified 10-carbon prenyl group. The first stage is catalyzed by the nonribosomal peptide synthetase penN that condenses anthranilic acid and O-methyl-L-tyrosine to produce 4'-methoxycyclopeptin. 4'-methoxycyclopeptin is then converted to 4'-methoxydehydrocyclopeptin by the ketoglutarate-dependent dioxygenase penM through dehydrogenation to form a double bond between C-alpha and C-beta of the O-methyltyrosine side chain. PenM also converts its first product methoxydehydrocyclopeptin to 4'-methoxycyclopenin. The following conversion of 4'methoxycyclopenin into 4'-methoxyviridicatin is catalyzed by the cyclopenase penL. 4'-methoxyviridicatin is the precursor of quinolone natural products, and is further converted to quinolinone B. The prenyltransferase penI then catalyzes the canonical Friedel-Crafts alkylation of quinolinone B with dimethylallyl cation to yield dimethylallyl quinolone, which is subjected to FAD-dependent dehydrogenation by the FAD-linked oxidoreductase penH to yield conjugated aryl diene. The delta(3') double bond then serves as the site of the second alkylation with DMAPP catalyzed by the prenyltransferase penG to yield a carbenium ion intermediate, which can be attacked by H(2)O to yield a styrenyl quinolone containing a C3'-hydroxyprenyl chain, or undergo cyclization to yield yaequinolones J1 and J2. The conversion of the styrenyl quinolone into the tetrahydrofuran-containing yaequinolone C is performed by the FAD-dependent monooxygenase penE and involves epoxidation of the terminal C7'-C8' olefin, followed by epoxide ring opening initiated by the C3' hydroxyl group. The predicted cysteine hydrolase penJ acts as an epoxide hydrolase that enhances the rate of the 5-exo-tet cyclization step, increasing the yield of yaequinolone C. PenF catalyzes the cationic rearrangement of the epoxide formed by penE (before ring opening to produce yaequinolone C) into yaequinolone D. Finally, the short-chain dehydrogenase/reductase (SDR)-like reductase penD, catalyzes both the dehydration of yaequinolone D and the reduction of the resulting oxonium to yield penigequinolone. This chain is O-methyltransferase penC, found in Penicillium thymicola.